Consider the following 245-residue polypeptide: Homeobox protein goosecoid (245 aa).

Residues 150 to 209 (KRRHRTIFTDEQLEALENLFQETKYPDVGTREQLARKVHLREEKVEVWFKNRRAKWRRQK) constitute a DNA-binding region (homeobox). Residues 203–245 (AKWRRQKRSSSEESENAQKWNKASKTSPEKRQEDGKSDLDSDS) are disordered. Residues 219–228 (AQKWNKASKT) are compositionally biased toward polar residues. A compositionally biased stretch (basic and acidic residues) spans 229–245 (SPEKRQEDGKSDLDSDS).

The protein belongs to the paired homeobox family. Bicoid subfamily.

Its subcellular location is the nucleus. Functionally, involved in the development of the organizer region in the gastrula (Hensen node in chicken). The sequence is that of Homeobox protein goosecoid (GSC) from Gallus gallus (Chicken).